Consider the following 156-residue polypeptide: ATP synthase subunit b (156 aa).

The helical transmembrane segment at 7-27 threads the bilayer; it reads LIGQTVAFIIFVWFCMKFVWP.

It belongs to the ATPase B chain family. As to quaternary structure, F-type ATPases have 2 components, F(1) - the catalytic core - and F(0) - the membrane proton channel. F(1) has five subunits: alpha(3), beta(3), gamma(1), delta(1), epsilon(1). F(0) has three main subunits: a(1), b(2) and c(10-14). The alpha and beta chains form an alternating ring which encloses part of the gamma chain. F(1) is attached to F(0) by a central stalk formed by the gamma and epsilon chains, while a peripheral stalk is formed by the delta and b chains.

The protein localises to the cell inner membrane. F(1)F(0) ATP synthase produces ATP from ADP in the presence of a proton or sodium gradient. F-type ATPases consist of two structural domains, F(1) containing the extramembraneous catalytic core and F(0) containing the membrane proton channel, linked together by a central stalk and a peripheral stalk. During catalysis, ATP synthesis in the catalytic domain of F(1) is coupled via a rotary mechanism of the central stalk subunits to proton translocation. In terms of biological role, component of the F(0) channel, it forms part of the peripheral stalk, linking F(1) to F(0). This Shewanella baltica (strain OS185) protein is ATP synthase subunit b.